A 204-amino-acid chain; its full sequence is Holliday junction branch migration complex subunit RuvA (204 aa).

The segment at 1 to 65 (MIGRLRGAVA…SAGLRLYGFG (65 aa)) is domain I. The interval 66-142 (TREDRRAFVL…PITDGPVLMT (77 aa)) is domain II. The interval 143–152 (APGAVAAAPA) is flexible linker. The interval 152 to 204 (AKAAPTGDAVAALMGLGVAEVNARRVVEAAAAKLGDEATVQALIKAGLQELGR) is domain III.

The protein belongs to the RuvA family. In terms of assembly, homotetramer. Forms an RuvA(8)-RuvB(12)-Holliday junction (HJ) complex. HJ DNA is sandwiched between 2 RuvA tetramers; dsDNA enters through RuvA and exits via RuvB. An RuvB hexamer assembles on each DNA strand where it exits the tetramer. Each RuvB hexamer is contacted by two RuvA subunits (via domain III) on 2 adjacent RuvB subunits; this complex drives branch migration. In the full resolvosome a probable DNA-RuvA(4)-RuvB(12)-RuvC(2) complex forms which resolves the HJ.

The protein resides in the cytoplasm. Its function is as follows. The RuvA-RuvB-RuvC complex processes Holliday junction (HJ) DNA during genetic recombination and DNA repair, while the RuvA-RuvB complex plays an important role in the rescue of blocked DNA replication forks via replication fork reversal (RFR). RuvA specifically binds to HJ cruciform DNA, conferring on it an open structure. The RuvB hexamer acts as an ATP-dependent pump, pulling dsDNA into and through the RuvAB complex. HJ branch migration allows RuvC to scan DNA until it finds its consensus sequence, where it cleaves and resolves the cruciform DNA. The protein is Holliday junction branch migration complex subunit RuvA of Caulobacter sp. (strain K31).